The primary structure comprises 83 residues: Small ribosomal subunit protein uS17 (83 aa).

The protein belongs to the universal ribosomal protein uS17 family. As to quaternary structure, part of the 30S ribosomal subunit.

Its function is as follows. One of the primary rRNA binding proteins, it binds specifically to the 5'-end of 16S ribosomal RNA. This chain is Small ribosomal subunit protein uS17, found in Aliarcobacter butzleri (strain RM4018) (Arcobacter butzleri).